The chain runs to 975 residues: Ubiquitin C-terminal hydrolase 15 (975 aa).

Residues cysteine 88, cysteine 91, cysteine 99, cysteine 102, cysteine 108, cysteine 112, histidine 121, and cysteine 125 each coordinate Zn(2+). Residues 88–125 (CATCHGPAKTRCSRCKSVRYCSGKCQIIHWRQGHKQTC) form an MYND-type zinc finger. A disordered region spans residues 301 to 378 (EGPYASAAES…STKTAVSTNS (78 aa)). Residues 309 to 322 (ESLQRSNSSGNVTG) show a composition bias toward polar residues. Over residues 354 to 369 (YDGHEKNPHNKNEQRS) the composition is skewed to basic and acidic residues. In terms of domain architecture, USP spans 441 to 747 (RGLFNCGNSC…GAYMLFYMRS (307 aa)). Cysteine 450 serves as the catalytic Nucleophile. Residue histidine 706 is the Proton acceptor of the active site. The tract at residues 764 to 783 (PTCSKRHSSKSSKGSKQDLN) is disordered.

This sequence belongs to the peptidase C19 family. As to expression, highly expressed in young panicles. Expressed in roots, leaf blades, leaf sheaths and stems. Expressed at low levels in brown grains.

It localises to the cytoplasm. The protein localises to the nucleus. The catalysed reaction is Thiol-dependent hydrolysis of ester, thioester, amide, peptide and isopeptide bonds formed by the C-terminal Gly of ubiquitin (a 76-residue protein attached to proteins as an intracellular targeting signal).. In terms of biological role, recognizes and hydrolyzes the peptide bond at the C-terminal Gly of ubiquitin. Involved in the processing of poly-ubiquitin precursors as well as that of ubiquitinated proteins. Involved in the regulation of grain size. Acts as positive regulator of grain width and size by influencing cell proliferation. Functions partially antagonistically with GW2 in the regulation of grain width. Possesses deubiquitinating enzyme activity in vitro. The polypeptide is Ubiquitin C-terminal hydrolase 15 (Oryza sativa subsp. japonica (Rice)).